Consider the following 95-residue polypeptide: Small ribosomal subunit protein bS16 (95 aa).

This sequence belongs to the bacterial ribosomal protein bS16 family.

The chain is Small ribosomal subunit protein bS16 from Thermosipho melanesiensis (strain DSM 12029 / CIP 104789 / BI429).